The following is a 342-amino-acid chain: Pre-mRNA-splicing factor 18 (342 aa).

Belongs to the PRP18 family. Interacts with the spliceosome. Part of a complex containing U4/U6 snRNPs.

Its subcellular location is the nucleus speckle. Participates in the second step of pre-mRNA splicing. This is Pre-mRNA-splicing factor 18 (prpf18) from Danio rerio (Zebrafish).